A 324-amino-acid chain; its full sequence is mRNA decay activator protein ZFP36 (324 aa).

The segment at 1-15 (MDLAAIYKSLLSLSP) is necessary for nuclear export. Residues 1-98 (MDLAAIYKSL…PTSPTATPTT (98 aa)) are necessary and sufficient for the association with mRNA decay enzymes and mRNA decay activation. Necessary for localization of ARE-containing mRNAs to processing bodies (PBs) regions lie at residues 1 to 172 (MDLA…DLAA) and 98 to 324 (TSSR…SVSE). The segment covering 15–46 (PELPSDLGETESSTSWASSGPWSLSSSDSSLP) has biased composition (low complexity). The interval 15-50 (PELPSDLGETESSTSWASSGPWSLSSSDSSLPEVAA) is disordered. At serine 58 the chain carries Phosphoserine; by MAPKAPK2. Phosphoserine is present on serine 64. The P-P-P-P-G repeat unit spans residues 69–73 (PPPPG). Positions 76-100 (PLAPRPSSDWSPSPTSPTATPTTSS) are disordered. A phosphoserine mark is found at serine 86 and serine 88. Residue threonine 90 is modified to Phosphothreonine. The residue at position 91 (serine 91) is a Phosphoserine. The necessary for nuclear localization stretch occupies residues 93–166 (TATPTTSSRY…GSRCHFIHNP (74 aa)). The interval 95–171 (TPTTSSRYKT…FIHNPSEDLA (77 aa)) is necessary for RNA-binding. 2 consecutive C3H1-type zinc fingers follow at residues 101–129 (RYKT…HGLG) and 139–167 (KYKT…HNPS). The interval 101 to 192 (RYKTELCRTF…ISFSGLPSGR (92 aa)) is necessary for interaction with PABPN1. At serine 167 the chain carries Phosphoserine. The tract at residues 172–324 (APGHPHVLRQ…PIFNRISVSE (153 aa)) is necessary for mRNA decay activation. Residue serine 184 is modified to Phosphoserine; by MAPKAPK2. Disordered regions lie at residues 185-227 (FSGL…LLLS) and 270-324 (PSAH…SVSE). Serine 195 carries the post-translational modification Phosphoserine. A P-P-P-P-G repeat occupies 196–200 (PPPAS). The span at 204 to 214 (PSVSSWSFSPS) shows a compositional bias: low complexity. Serine 216 carries the phosphoserine modification. A P-P-P-P-G repeat occupies 218-222 (PPPPG). A Phosphoserine; by MAPK1; in vitro modification is found at serine 227. A phosphoserine mark is found at serine 274, serine 294, and serine 321. Residues 310-324 (APRRLPIFNRISVSE) form an interaction with CNOT1 region.

Associates with cytoplasmic CCR4-NOT and PAN2-PAN3 deadenylase complexes to trigger ARE-containing mRNA deadenylation and decay processes. Part of a mRNA decay activation complex at least composed of poly(A)-specific exoribonucleases CNOT6, EXOSC2 and XRN1 and mRNA-decapping enzymes DCP1A and DCP2. Associates with the RNA exosome complex. Interacts (via phosphorylated form) with 14-3-3 proteins; these interactions promote exclusion of ZFP36 from cytoplasmic stress granules in response to arsenite treatment in a MAPKAPK2-dependent manner and does not prevent CCR4-NOT deadenylase complex recruitment or ZFP36-induced ARE-containing mRNA deadenylation and decay processes. Interacts with 14-3-3 proteins; these interactions occur in response to rapamycin in an Akt-dependent manner. Interacts with AGO2 and AGO4. Interacts (via C-terminus) with CNOT1; this interaction occurs in a RNA-independent manner and induces mRNA deadenylation. Interacts (via N-terminus) with CNOT6. Interacts with CNOT6L. Interacts (via C-terminus) with CNOT7; this interaction occurs in a RNA-independent manner, induces mRNA deadenylation and is inhibited in a phosphorylation MAPKAPK2-dependent manner. Interacts (via unphosphorylated form) with CNOT8; this interaction occurs in a RNA-independent manner and is inhibited in a phosphorylation MAPKAPK2-dependent manner. Interacts with DCP1A. Interacts (via N-terminus) with DCP2. Interacts with EDC3. Interacts (via N-terminus) with EXOSC2. Interacts with heat shock 70 kDa proteins. Interacts with KHSRP; this interaction increases upon cytokine-induced treatment. Interacts with MAP3K4; this interaction enhances the association with SH3KBP1/CIN85. Interacts with MAPKAPK2; this interaction occurs upon skeletal muscle satellite cell activation. Interacts with NCL. Interacts with NUP214; this interaction increases upon lipopolysaccharide (LPS) stimulation. Interacts with PABPC1; this interaction occurs in a RNA-dependent manner. Interacts (via hypophosphorylated form) with PABPN1 (via RRM domain and C-terminal arginine-rich region); this interaction occurs in the nucleus in a RNA-independent manner, decreases in presence of single-stranded poly(A) RNA-oligomer and in a p38 MAPK-dependent-manner and inhibits nuclear poly(A) tail synthesis. Interacts with PAN2. Interacts (via C3H1-type zinc finger domains) with PKM. Interacts (via C3H1-type zinc finger domains) with nuclear RNA poly(A) polymerase. Interacts with PPP2CA; this interaction occurs in LPS-stimulated cells and induces ZFP36 dephosphorylation, and hence may promote ARE-containing mRNAs decay. Interacts (via C-terminus) with PRR5L (via C-terminus); this interaction may accelerate ZFP36-mediated mRNA decay during stress. Interacts (via C-terminus) with SFN; this interaction occurs in a phosphorylation-dependent manner. Interacts (via extreme C-terminal region) with SH3KBP1/CIN85 (via SH3 domains); this interaction enhances MAP3K4-induced phosphorylation of ZFP36 at Ser-64 and Ser-91 and does not alter neither ZFP36 binding to ARE-containing transcripts nor TNF-alpha mRNA decay. Interacts with XRN1. Interacts (via C-terminus and Ser-184 phosphorylated form) with YWHAB; this interaction occurs in a p38/MAPKAPK2-dependent manner, increases cytoplasmic localization of ZFP36 and protects ZFP36 from Ser-184 dephosphorylation by serine/threonine phosphatase 2A, and hence may be crucial for stabilizing ARE-containing mRNAs. Interacts (via phosphorylated form) with YWHAE. Interacts (via C-terminus) with YWHAG; this interaction occurs in a phosphorylation-dependent manner. Interacts with YWHAH; this interaction occurs in a phosphorylation-dependent manner. Interacts with YWHAQ; this interaction occurs in a phosphorylation-dependent manner. Interacts with (via C-terminus) YWHAZ; this interaction occurs in a phosphorylation-dependent manner. Does not interact with SH3KBP1. Interacts (via P-P-P-P-G repeats) with GIGYF2; the interaction is direct. Post-translationally, phosphorylated. Phosphorylation at serine and/or threonine residues occurs in a p38 MAPK- and MAPKAPK2-dependent manner. Phosphorylated by MAPKAPK2 at Ser-58 and Ser-184; phosphorylation increases its stability and cytoplasmic localization, promotes binding to 14-3-3 adapter proteins and inhibits the recruitment of cytoplasmic CCR4-NOT and PAN2-PAN3 deadenylase complexes to the mRNA decay machinery, thereby inhibiting ZFP36-induced ARE-containing mRNA deadenylation and decay processes. Phosphorylation by MAPKAPK2 does not impair ARE-containing RNA-binding. Phosphorylated in a MAPKAPK2- and p38 MAPK-dependent manner upon skeletal muscle satellite cell activation; this phosphorylation inhibits ZFP36-mediated mRNA decay activity, and hence stabilizes MYOD1 mRNA. Phosphorylated by MAPK1 upon mitogen stimulation. Phosphorylated at Ser-64 and Ser-91; these phosphorylations increase in a SH3KBP1-dependent manner. Phosphorylated at serine and threonine residues in a pyruvate kinase PKM- and p38 MAPK-dependent manner. Phosphorylation at Ser-58 may participate in the PKM-mediated degradation of ZFP36 in a p38 MAPK-dependent manner. Dephosphorylated by serine/threonine phosphatase 2A at Ser-184. In terms of processing, ubiquitinated; pyruvate kinase (PKM)-dependent ubiquitination leads to proteasomal degradation through a p38 MAPK signaling pathway.

The protein resides in the nucleus. It is found in the cytoplasm. It localises to the cytoplasmic granule. Its subcellular location is the P-body. In terms of biological role, zinc-finger RNA-binding protein that destabilizes numerous cytoplasmic AU-rich element (ARE)-containing mRNA transcripts by promoting their poly(A) tail removal or deadenylation, and hence provide a mechanism for attenuating protein synthesis. Acts as an 3'-untranslated region (UTR) ARE mRNA-binding adapter protein to communicate signaling events to the mRNA decay machinery. Recruits deadenylase CNOT7 (and probably the CCR4-NOT complex) via association with CNOT1, and hence promotes ARE-mediated mRNA deadenylation. Also functions by recruiting components of the cytoplasmic RNA decay machinery to the bound ARE-containing mRNAs. Self regulates by destabilizing its own mRNA. Binds to 3'-UTR ARE of numerous mRNAs. Also binds to ARE of its own mRNA. Plays a role in anti-inflammatory responses; suppresses tumor necrosis factor (TNF)-alpha production by stimulating ARE-mediated TNF-alpha mRNA decay and several other inflammatory ARE-containing mRNAs in interferon (IFN)- and/or lipopolysaccharide (LPS)-induced macrophages. Also plays a role in the regulation of dendritic cell maturation at the post-transcriptional level, and hence operates as part of a negative feedback loop to limit the inflammatory response. Promotes ARE-mediated mRNA decay of hypoxia-inducible factor HIF1A mRNA during the response of endothelial cells to hypoxia. Positively regulates early adipogenesis of preadipocytes by promoting ARE-mediated mRNA decay of immediate early genes (IEGs). Negatively regulates hematopoietic/erythroid cell differentiation by promoting ARE-mediated mRNA decay of the transcription factor STAT5B mRNA. Plays a role in maintaining skeletal muscle satellite cell quiescence by promoting ARE-mediated mRNA decay of the myogenic determination factor MYOD1 mRNA. Also associates with and regulates the expression of non-ARE-containing target mRNAs at the post-transcriptional level, such as MHC class I mRNAs. Participates in association with argonaute RISC catalytic components in the ARE-mediated mRNA decay mechanism; assists microRNA (miRNA) targeting ARE-containing mRNAs. May also play a role in the regulation of cytoplasmic mRNA decapping; enhances decapping of ARE-containing RNAs, in vitro. Involved in the delivery of target ARE-mRNAs to processing bodies (PBs). In addition to its cytosolic mRNA-decay function, affects nuclear pre-mRNA processing. Negatively regulates nuclear poly(A)-binding protein PABPN1-stimulated polyadenylation activity on ARE-containing pre-mRNA during LPS-stimulated macrophages. Also involved in the regulation of stress granule (SG) and P-body (PB) formation and fusion. Plays a role in the regulation of keratinocyte proliferation, differentiation and apoptosis. Plays a role as a tumor suppressor by inhibiting cell proliferation in breast cancer cells. This is mRNA decay activator protein ZFP36 from Bos taurus (Bovine).